Consider the following 576-residue polypeptide: Small ribosomal subunit protein mS80 (rPPR6) (576 aa).

Residues 1 to 76 constitute a mitochondrion transit peptide; that stretch reads MLRSFLCRSQ…SLPADEIPIS (76 aa). PPR repeat units lie at residues 230 to 264, 265 to 299, 300 to 336, 341 to 370, 371 to 405, 406 to 440, 441 to 475, 476 to 510, and 511 to 546; these read NLEILNELIALFGKLGKSKAAFDVFSKTEEFGFTP, NAKTYYLTLEALCKRSFMDWACSVCEKMLKSGVLS, EGEQMGNIITWFCKEGKAEEAYSVYELAKTKEKSLPP, TLITALCKNDGTITFAQEMLGDLSGEARRR, GIKPFSDVIHSLCRMRNVKDAKALLLDMISKGPAP, GNAVFNLVVHACSKTGDLDEAKEVLKLMESRGLKP, DVYTYTVIISGYAKGGMMDEAQEILAEAKKKHKKL, SPVTYHALIRGYCKIEEYDEALKLLNEMDRFGVQP, and NADEYNKLIQSFCLKALDWEKAEVLFEEMKQKGLHL.

Belongs to the PPR family. P subfamily. As to quaternary structure, component of the mitochondrial ribosome small subunit.

Its subcellular location is the mitochondrion. The chain is Small ribosomal subunit protein mS80 (rPPR6) from Arabidopsis thaliana (Mouse-ear cress).